The primary structure comprises 461 residues: Cyclic 2,3-diphosphoglycerate synthetase (461 aa).

This sequence belongs to the cyclic 2,3-diphosphoglycerate synthetase family.

The protein resides in the cytoplasm. It carries out the reaction (2R)-2,3-bisphosphoglycerate + ATP + H(+) = cyclic (2R)-2,3-bisphosphoglycerate + ADP + phosphate. Its function is as follows. Catalyzes the formation of cyclic 2,3-diphosphoglycerate (cDPG) by formation of an intramolecular phosphoanhydride bond at the expense of ATP. This chain is Cyclic 2,3-diphosphoglycerate synthetase, found in Methanosphaera stadtmanae (strain ATCC 43021 / DSM 3091 / JCM 11832 / MCB-3).